Here is a 51-residue protein sequence, read N- to C-terminus: MKMKKCPKCGKYTLKDFCSECNEKSVTVKPPKFSPVDKYGKYRRALKKAKM.

This sequence belongs to the NOP10 family.

In terms of biological role, involved in ribosome biogenesis; more specifically in 18S rRNA pseudouridylation and in cleavage of pre-rRNA. The protein is Ribosome biogenesis protein Nop10 of Methanococcus maripaludis (strain C6 / ATCC BAA-1332).